Here is a 299-residue protein sequence, read N- to C-terminus: GTPase Era (299 aa).

Residues 9–177 (RSGSVAVIGR…VGDLLKLVPE (169 aa)) form the Era-type G domain. Residues 17 to 24 (GRPNVGKS) form a G1 region. 17 to 24 (GRPNVGKS) serves as a coordination point for GTP. A G2 region spans residues 43–47 (QTTRH). The G3 stretch occupies residues 64–67 (DTPG). GTP contacts are provided by residues 64–68 (DTPGL) and 126–129 (NKVD). The segment at 126-129 (NKVD) is G4. The interval 156–158 (VSA) is G5. The 85-residue stretch at 200–284 (VREQLMRQLG…FLETWVRVRE (85 aa)) folds into the KH type-2 domain.

Belongs to the TRAFAC class TrmE-Era-EngA-EngB-Septin-like GTPase superfamily. Era GTPase family. Monomer.

The protein localises to the cytoplasm. It localises to the cell inner membrane. In terms of biological role, an essential GTPase that binds both GDP and GTP, with rapid nucleotide exchange. Plays a role in 16S rRNA processing and 30S ribosomal subunit biogenesis and possibly also in cell cycle regulation and energy metabolism. This chain is GTPase Era, found in Xanthomonas axonopodis pv. citri (strain 306).